We begin with the raw amino-acid sequence, 894 residues long: Alpha-actinin-2 (894 aa).

Positions 1 to 254 (MNQIEPGVQY…IMTYVSCFYH (254 aa)) are actin-binding. Calponin-homology (CH) domains are found at residues 38-142 (KQQR…LRFA) and 151-257 (TSAK…HAFA). Thr237 bears the Phosphothreonine mark. Spectrin repeat units follow at residues 281-391 (RLME…WLLN), 401-506 (HLAE…ALER), 516-627 (QLHL…SLQE), and 637-740 (RLRR…EVET). EF-hand domains lie at 753 to 788 (EQMNEFRASFNHFDRRKNGLMDHEDFRACLISMGYD) and 789 to 824 (LGEAEFARIMTLVDPNGQGTVTFQSFIDFMTRETAD). The Ca(2+) site is built by Asp766, Asn770, Asp777, Asp802, Asn804, and Thr808.

This sequence belongs to the alpha-actinin family. In terms of assembly, homodimer; antiparallel. Also forms heterodimers with ACTN3. Interacts with ADAM12, MYOZ1, MYOZ2 and MYOZ3. Interacts via its C-terminal region with the LDB3 PDZ domain. Interacts with XIRP2. Interacts with DST isoform 1 (via N-terminus). Interacts with PARVB. Interacts with SYNPO2. Ubiquitinated by FBXL22, leading to proteasomal degradation. Expressed in both skeletal and cardiac muscle.

It is found in the cytoplasm. The protein localises to the myofibril. Its subcellular location is the sarcomere. The protein resides in the z line. In terms of biological role, F-actin cross-linking protein which is thought to anchor actin to a variety of intracellular structures. This is a bundling protein. This Homo sapiens (Human) protein is Alpha-actinin-2 (ACTN2).